The chain runs to 152 residues: Leukocyte-associated immunoglobulin-like receptor 2 (152 aa).

An N-terminal signal peptide occupies residues 1–21 (MSPHLTALLGLVLCLAQTIHT). In terms of domain architecture, Ig-like C2-type spans 29-117 (PSISAEPGTV…GWSEHSDFLE (89 aa)). The cysteines at positions 49 and 101 are disulfide-linked. Positions 120–152 (VKESSGGPDSPDTEPGSSAGTVPGTEASGFDAP) are disordered.

It is found in the secreted. The polypeptide is Leukocyte-associated immunoglobulin-like receptor 2 (LAIR2) (Homo sapiens (Human)).